A 457-amino-acid chain; its full sequence is Dynein regulatory complex protein 10 (457 aa).

Coiled-coil stretches lie at residues 101 to 127, 209 to 258, and 292 to 381; these read EKAS…DQER, IQDI…LHQV, and QQDI…AESE. Residues 397–426 form the IQ domain; it reads MVRAATLIQAMWKGYLVRSMLRSRKKKRVK. The interval 419 to 457 is disordered; the sequence is SRKKKRVKSKGKDKGKGKEKPKEEKGKEKKAKGKGKGKK. Basic and acidic residues predominate over residues 428-445; the sequence is KGKDKGKGKEKPKEEKGK. The segment covering 446–457 has biased composition (basic residues); the sequence is EKKAKGKGKGKK.

The protein belongs to the DRC10 family. In terms of assembly, component of the nexin-dynein regulatory complex (N-DRC). Interacts with CFAP52.

It localises to the cytoplasm. The protein localises to the cytoskeleton. Its subcellular location is the flagellum axoneme. Component of the nexin-dynein regulatory complex (N-DRC), a key regulator of ciliary/flagellar motility which maintains the alignment and integrity of the distal axoneme and regulates microtubule sliding in motile axonemes. The sequence is that of Dynein regulatory complex protein 10 (Iqcd) from Rattus norvegicus (Rat).